Reading from the N-terminus, the 346-residue chain is Biotin synthase (346 aa).

One can recognise a Radical SAM core domain in the interval 38 to 256 (RQVQVSTLLS…IAVARIMMPT (219 aa)). Residues Cys-53, Cys-57, and Cys-60 each contribute to the [4Fe-4S] cluster site. The [2Fe-2S] cluster site is built by Cys-97, Cys-128, Cys-188, and Arg-260.

Belongs to the radical SAM superfamily. Biotin synthase family. Homodimer. It depends on [4Fe-4S] cluster as a cofactor. Requires [2Fe-2S] cluster as cofactor.

The enzyme catalyses (4R,5S)-dethiobiotin + (sulfur carrier)-SH + 2 reduced [2Fe-2S]-[ferredoxin] + 2 S-adenosyl-L-methionine = (sulfur carrier)-H + biotin + 2 5'-deoxyadenosine + 2 L-methionine + 2 oxidized [2Fe-2S]-[ferredoxin]. It participates in cofactor biosynthesis; biotin biosynthesis; biotin from 7,8-diaminononanoate: step 2/2. In terms of biological role, catalyzes the conversion of dethiobiotin (DTB) to biotin by the insertion of a sulfur atom into dethiobiotin via a radical-based mechanism. This Escherichia coli O6:H1 (strain CFT073 / ATCC 700928 / UPEC) protein is Biotin synthase.